The sequence spans 737 residues: Zinc finger protein 280C (737 aa).

Residues Lys-5, Lys-10, Lys-14, Lys-33, and Lys-55 each participate in a glycyl lysine isopeptide (Lys-Gly) (interchain with G-Cter in SUMO2) cross-link. Positions 57-66 (AISNILNRGH) are enriched in polar residues. Residues 57–137 (AISNILNRGH…DFTKNSQVGS (81 aa)) are disordered. A Glycyl lysine isopeptide (Lys-Gly) (interchain with G-Cter in SUMO2) cross-link involves residue Lys-75. A Phosphoserine modification is found at Ser-80. The span at 112–123 (SKSSQSSVTVEN) shows a compositional bias: polar residues. Glycyl lysine isopeptide (Lys-Gly) (interchain with G-Cter in SUMO2) cross-links involve residues Lys-113, Lys-126, Lys-167, Lys-174, Lys-180, and Lys-187. The span at 176-185 (PSTSKVNSVT) shows a compositional bias: polar residues. The tract at residues 176–223 (PSTSKVNSVTPKKPKTSEDVPQINPSTSLPLIGSPPVTSSQVMLSKGT) is disordered. A compositionally biased stretch (polar residues) spans 211–223 (PVTSSQVMLSKGT). Thr-223 bears the Phosphothreonine mark. Phosphoserine is present on Ser-227. Residue Lys-273 forms a Glycyl lysine isopeptide (Lys-Gly) (interchain with G-Cter in SUMO2) linkage. 5 C2H2-type zinc fingers span residues 316 to 338 (FKCFSCSKVLKNNIRFMNHMKHH), 353 to 376 (TTCQHCYRQYPTPFQLQCHIESTH), 383 to 406 (TICKICELSFETEHILLQHMKDTH), 413 to 436 (YVCQVCQFRSSTFSDVEAHFRAAH), and 470 to 492 (HRCPKCRLQFLTSKEKAEHKAQH). Residue Lys-522 forms a Glycyl lysine isopeptide (Lys-Gly) (interchain with G-Cter in SUMO2) linkage. The segment covering 535-579 (SFLQVTPPTSQNTTARNPRKSNASRSKTSKLHATTSTASKVNTSK) has biased composition (polar residues). The disordered stretch occupies residues 535 to 602 (SFLQVTPPTS…YKQKRQRNRK (68 aa)). At Thr-540 the chain carries Phosphothreonine. Glycyl lysine isopeptide (Lys-Gly) (interchain with G-Cter in SUMO2) cross-links involve residues Lys-564 and Lys-574. Residues 580–602 (PRGRIAKSKAKPSYKQKRQRNRK) show a composition bias toward basic residues.

It is found in the nucleus. In terms of biological role, may function as a transcription factor. The chain is Zinc finger protein 280C (ZNF280C) from Homo sapiens (Human).